A 141-amino-acid chain; its full sequence is Large ribosomal subunit protein uL11 (141 aa).

Belongs to the universal ribosomal protein uL11 family. Part of the ribosomal stalk of the 50S ribosomal subunit. Interacts with L10 and the large rRNA to form the base of the stalk. L10 forms an elongated spine to which L12 dimers bind in a sequential fashion forming a multimeric L10(L12)X complex. In terms of processing, one or more lysine residues are methylated.

In terms of biological role, forms part of the ribosomal stalk which helps the ribosome interact with GTP-bound translation factors. This chain is Large ribosomal subunit protein uL11, found in Streptococcus agalactiae serotype III (strain NEM316).